The primary structure comprises 122 residues: Small ribosomal subunit protein uS13 (122 aa).

The segment at 97-122 (PVRGQRTKTNARTRKGPARTVAGKKK) is disordered.

It belongs to the universal ribosomal protein uS13 family. Part of the 30S ribosomal subunit. Forms a loose heterodimer with protein S19. Forms two bridges to the 50S subunit in the 70S ribosome.

In terms of biological role, located at the top of the head of the 30S subunit, it contacts several helices of the 16S rRNA. In the 70S ribosome it contacts the 23S rRNA (bridge B1a) and protein L5 of the 50S subunit (bridge B1b), connecting the 2 subunits; these bridges are implicated in subunit movement. Contacts the tRNAs in the A and P-sites. This is Small ribosomal subunit protein uS13 from Geobacter metallireducens (strain ATCC 53774 / DSM 7210 / GS-15).